The chain runs to 522 residues: Putative cysteine ligase BshC (522 aa).

Positions 436–469 (SWAQAEKAKALKQLEDIEKKLRKAEERKHDDVIK) form a coiled coil.

Belongs to the BshC family.

This Cytophaga hutchinsonii (strain ATCC 33406 / DSM 1761 / CIP 103989 / NBRC 15051 / NCIMB 9469 / D465) protein is Putative cysteine ligase BshC.